The primary structure comprises 197 residues: Ras-related protein Rab-7B (197 aa).

Residues 14 to 21, 33 to 38, 57 to 61, 119 to 122, and 152 to 153 each bind GTP; these read GEKSVGKT, VTLKPT, DTSGQ, NKID, and AK. The short motif at 31 to 39 is the Effector region element; the sequence is RFVTLKPTI. Residues Cys-196 and Cys-197 are each lipidated (S-geranylgeranyl cysteine).

It belongs to the small GTPase superfamily. Rab family.

Functionally, protein transport. Probably involved in vesicular traffic. This is Ras-related protein Rab-7B (rab7B) from Dictyostelium discoideum (Social amoeba).